The sequence spans 449 residues: Myb-related protein Pp1 (449 aa).

The HTH myb-type domain occupies 1–30 (LGNRWSAIAIPRRTDNEIKNYWNTHLKKRL). A DNA-binding region (H-T-H motif) is located at residues 5 to 26 (WSAIAIPRRTDNEIKNYWNTHL).

The protein resides in the nucleus. Its function is as follows. Possible transcription activator. The chain is Myb-related protein Pp1 (PP1) from Physcomitrium patens (Spreading-leaved earth moss).